A 415-amino-acid polypeptide reads, in one-letter code: MKLKSFLLRYYPPGIMLEYEKHGELKTKSIDLLDLGPSTDVSALVEEIQKAEPLITASRTEQVKLLIQRLQEKLGQHSNHTFYLFKVLKAHILPLTNVALNKSGSCFITGSYDRTCKLWDTASGEELNTLEGHRNVVYAIAFNNPYGDKTATGSFDKTCKLWSVETGKCYHTFRGHTAEIVCLSFNPQSTLVATGSMDTTAKLWNIQNGEEVCTLRGHSAEIISLSFNTSGDRIITGSFDHTVVVWDADTGGKVNILIGHCAEISSALFNWDCSLILTGSMDKTCMLWDATNGKCVATLTGHDDEILDSCFDYTGKLIATASADGTARIFSAATRKCIAKLEGHEGEISKISFNPQGNRLLTGSSDKTARIWDAQTGQCLQVLEGHTDEIFSCTFNYKGNIVITGSKDNTCRIWR.

WD repeat units lie at residues 90–129, 132–174, 175–214, 217–256, 259–298, 301–340, 343–384, and 386–415; these read AHIL…ELNT, GHRN…HTFR, GHTA…EVCT, GHSA…KVNI, GHCA…CVAT, GHDD…CIAK, GHEG…QVLE, and HTDE…RIWR.

It belongs to the WD repeat WDR69 family. In terms of assembly, interacts with IFT46.

The protein localises to the cytoplasm. The protein resides in the cytoskeleton. It localises to the flagellum basal body. It is found in the flagellum axoneme. In terms of biological role, required for axonemal dynein assembly and ciliary motility in ciliated organs, including Kupffer's vesicle, during embryogenesis. Facilitates the onset of robust cilia motility during development. The chain is Dynein assembly factor with WD repeat domains 1 (DAW1) from Macaca fascicularis (Crab-eating macaque).